The following is a 693-amino-acid chain: TBC1 domain family member 12 (693 aa).

Position 1 is an N-acetylmethionine (Met1). 3 disordered regions span residues 1-57 (MMGP…EAPP), 91-120 (RGSGMTNGDSGFLLLQDRRGPEEARRRRTC), and 156-229 (AAGD…TTVR). Low complexity predominate over residues 40–49 (GAVAAEPPGE). Positions 106 to 115 (QDRRGPEEAR) are enriched in basic and acidic residues. Residues Ser202 and Ser233 each carry the phosphoserine modification. Residues 402 to 610 (GLPPSVRGKV…RVWDVFCRDG (209 aa)) enclose the Rab-GAP TBC domain.

In terms of assembly, interacts with RAB11A; this interaction recruits TBC1D12 to RAB11A-positive recycling endosomes.

The protein resides in the endosome. Functionally, RAB11A-binding protein that plays a role in neurite outgrowth. In Rattus norvegicus (Rat), this protein is TBC1 domain family member 12 (Tbc1d12).